The following is a 349-amino-acid chain: 5-deoxyribose 1-phosphate isomerase (349 aa).

Residues 49–51, arginine 92, and glutamine 199 each bind substrate; that span reads RGA. Aspartate 240 acts as the Proton donor in catalysis. 250–251 is a substrate binding site; it reads NK.

The protein belongs to the EIF-2B alpha/beta/delta subunits family. DrdI subfamily.

The catalysed reaction is 5-deoxy-alpha-D-ribose 1-phosphate = 5-deoxy-D-ribulose 1-phosphate. Its pathway is carbohydrate degradation. Its function is as follows. Catalyzes the isomerization of 5-deoxy-alpha-D-ribose 1-phosphate to 5-deoxy-D-ribulose 1-phosphate, as part of a 5-deoxyribose salvage pathway that recycles this toxic radical SAM enzyme by-product to mainstream metabolites. This Clostridium botulinum (strain Kyoto / Type A2) protein is 5-deoxyribose 1-phosphate isomerase.